The primary structure comprises 2475 residues: Non-reducing polyketide synthase prhL (2475 aa).

The tract at residues 14–253 is N-terminal acylcarrier protein transacylase domain (SAT); it reads VLFGSKYSEI…HHADHLSAAQ (240 aa). One can recognise a Ketosynthase family 3 (KS3) domain in the interval 384–800; the sequence is SIPIAVTGLA…GSNAAIVLKE (417 aa). Active-site for beta-ketoacyl synthase activity residues include cysteine 549, histidine 684, and histidine 723. Positions 910–1212 are malonyl-CoA:ACP transacylase (MAT) domain; it reads LCFGGQTGNK…CPMDLSGPQA (303 aa). Serine 997 functions as the For acyl/malonyl transferase activity in the catalytic mechanism. An N-terminal hotdog fold region spans residues 1279-1407; the sequence is EGLKLVQLLK…GTISLSPGAN (129 aa). The region spanning 1279–1586 is the PKS/mFAS DH domain; sequence EGLKLVQLLK…FTSVSIQSLR (308 aa). A product template (PT) domain region spans residues 1282-1585; it reads KLVQLLKNEG…TFTSVSIQSL (304 aa). Histidine 1312 serves as the catalytic Proton acceptor; for dehydratase activity. A C-terminal hotdog fold region spans residues 1435-1586; that stretch reads SSSGLKRSTV…FTSVSIQSLR (152 aa). Aspartate 1493 (proton donor; for dehydratase activity) is an active-site residue. Residues 1626-1703 enclose the Carrier domain; sequence SSNGDDLRTV…ALVQRIFPGR (78 aa). The residue at position 1663 (serine 1663) is an O-(pantetheine 4'-phosphoryl)serine. A methyltransferase (CMeT) domain region spans residues 1865-2098; it reads HHTSEHKLLH…GFNWVDWTDN (234 aa). The thioesterase (TE) domain stretch occupies residues 2127 to 2475; sequence SDIHEETVVY…YEFLRSHVRL (349 aa). Residues serine 2250 and aspartate 2412 each act as for thioesterase activity in the active site.

It carries out the reaction 3 malonyl-CoA + acetyl-CoA + 2 S-adenosyl-L-methionine = 3,5-dimethylorsellinate + 2 S-adenosyl-L-homocysteine + 3 CO2 + 4 CoA. It participates in secondary metabolite biosynthesis; terpenoid biosynthesis. In terms of biological role, non-reducing polyketide synthase; part of the gene cluster that mediates the biosynthesis of paraherquonin, a meroterpenoid with a unique, highly congested hexacyclic molecular architecture. The first step of the pathway is the synthesis of 3,5-dimethylorsellinic acid (DMOA) by the polyketide synthase prhL. Synthesis of DMOA is followed by farnesylation by the prenyltransferase prhE, methylesterification by the methyl-transferase prhM, epoxidation of the prenyl chain by the flavin-dependent monooxygenase prhF, and cyclization of the farnesyl moiety by the terpene cyclase prhH, to yield the tetracyclic intermediate, protoaustinoid A. The short chain dehydrogenase prhI then oxidizes the C-3 alcohol group of the terpene cyclase product to transform protoaustinoid A into protoaustinoid B. The FAD-binding monooxygenase prhJ catalyzes the oxidation of protoaustinoid B into preaustinoid A which is further oxidized into preaustinoid A1 by FAD-binding monooxygenase phrK. Finally, prhA leads to berkeleydione via the berkeleyone B intermediate. PrhA is a multifunctional dioxygenase that first desaturates at C5-C6 to form berkeleyone B, followed by rearrangement of the A/B-ring to form the cycloheptadiene moiety in berkeleydione. Berkeleydione serves as the key intermediate for the biosynthesis of paraherquonin as well as many other meroterpenoids. The cytochrome P450 monooxygenases prhB, prhD, and prhN, as well as the isomerase prhC, are probably involved in the late stage of paraherquonin biosynthesis, after the production of berkeleydione. Especially prhC might be a multifunctional enzyme that catalyzes the D-ring expansion via intramolecular methoxy rearrangement, as well as the hydrolysis of the expanded D-ring. The polypeptide is Non-reducing polyketide synthase prhL (Penicillium brasilianum).